Here is an 858-residue protein sequence, read N- to C-terminus: Protein 4.1 (858 aa).

The interval Met1–Asp125 is disordered. At Ser14 the chain carries Phosphoserine. Positions Gln31 to Gln50 are enriched in low complexity. Phosphothreonine is present on Thr62. Basic and acidic residues predominate over residues Pro63–Glu77. Over residues Ser78–Leu89 the composition is skewed to low complexity. Phosphoserine is present on residues Ser86, Ser87, Ser97, Ser106, Ser123, Ser151, Ser153, and Ser154. Residues Glu103–Glu119 are compositionally biased toward basic and acidic residues. A disordered region spans residues Ile155–His208. Basic and acidic residues-rich tracts occupy residues Gln161–Glu176 and Glu185–Ala200. Ser192 carries the post-translational modification Phosphoserine. The 282-residue stretch at Met211–Ser492 folds into the FERM domain. Tyr223 is subject to Phosphotyrosine. Phosphothreonine is present on Thr379. Positions Thr495 to Trp608 are hydrophilic. The segment at Thr518 to Asp636 is disordered. Phosphoserine is present on residues Ser522, Ser541, Ser543, and Ser556. Basic and acidic residues-rich tracts occupy residues Thr581 to Glu595 and Glu606 to Thr615. A spectrin--actin-binding region spans residues Lys609–Pro707. Positions Glu616–Lys629 are enriched in polar residues. Tyr654 carries the post-translational modification Phosphotyrosine. Phosphoserine occurs at positions 658, 668, 678, 703, and 706. The interval Thr710–Glu858 is C-terminal (CTD). Phosphothreonine is present on residues Thr730 and Thr853.

In terms of assembly, binds with a high affinity to glycophorin and with lower affinity to band III protein. Associates with the nuclear mitotic apparatus. Binds calmodulin, CPAP and DLG1. Also found to associate with contractile apparatus and tight junctions. Interacts with NUMA1; this interaction is negatively regulated by CDK1 during metaphase and promotes anaphase-specific localization of NUMA1 in symmetrically dividing cells. Interacts with ATP2B1; regulates small intestinal calcium absorption through regulation of membrane expression of ATP2B1. O-glycosylated; contains N-acetylglucosamine side chains in the C-terminal domain. Post-translationally, phosphorylated at multiple sites by different protein kinases and each phosphorylation event selectively modulates the protein's functions. In terms of processing, phosphorylation on Tyr-654 reduces the ability of 4.1 to promote the assembly of the spectrin/actin/4.1 ternary complex.

Its subcellular location is the nucleus. The protein localises to the cytoplasm. It is found in the cytoskeleton. The protein resides in the cell cortex. In terms of biological role, protein 4.1 is a major structural element of the erythrocyte membrane skeleton. It plays a key role in regulating membrane physical properties of mechanical stability and deformability by stabilizing spectrin-actin interaction. Recruits DLG1 to membranes. Required for dynein-dynactin complex and NUMA1 recruitment at the mitotic cell cortex during anaphase. The protein is Protein 4.1 of Mus musculus (Mouse).